Reading from the N-terminus, the 108-residue chain is Anti-CBASS protein 2 (108 aa).

Gln-4, Tyr-11, and Lys-26 together coordinate 3',3'-cGAMP.

The protein belongs to the Acb2 family. In terms of assembly, homohexamer in apo and 3',3'-cGAMP-bound form.

In terms of biological role, antagonizes CBASS (cyclic oligonucleotide-based antiphage signaling system). Binds and sequesters host-produced 3',3'-cyclic GMP-AMP (cGAMP) (thus preventing host CapV activation) without degrading the cyclic nucleotide. Probably binds some other cyclic dinucleotides as well. This is Anti-CBASS protein 2 from Pseudomonas phage JBD67.